Reading from the N-terminus, the 305-residue chain is J domain-containing protein 1 (305 aa).

In terms of domain architecture, J spans 91 to 163; sequence TPYEVLGLVK…SRRRMYDMYA (73 aa). A helical membrane pass occupies residues 212–232; sequence WGMVVWALCMLAGFQVMAFLI.

This sequence belongs to the DnaJ family.

The protein resides in the mitochondrion membrane. Its function is as follows. Probable chaperone. The protein is J domain-containing protein 1 (JID1) of Eremothecium gossypii (strain ATCC 10895 / CBS 109.51 / FGSC 9923 / NRRL Y-1056) (Yeast).